We begin with the raw amino-acid sequence, 155 residues long: Regulatory protein RecX (155 aa).

This sequence belongs to the RecX family.

It localises to the cytoplasm. Functionally, modulates RecA activity. This is Regulatory protein RecX from Vibrio parahaemolyticus serotype O3:K6 (strain RIMD 2210633).